The following is a 72-amino-acid chain: Translation initiation factor IF-1 (72 aa).

Residues Met-1–Lys-72 enclose the S1-like domain.

It belongs to the IF-1 family. In terms of assembly, component of the 30S ribosomal translation pre-initiation complex which assembles on the 30S ribosome in the order IF-2 and IF-3, IF-1 and N-formylmethionyl-tRNA(fMet); mRNA recruitment can occur at any time during PIC assembly.

Its subcellular location is the cytoplasm. One of the essential components for the initiation of protein synthesis. Stabilizes the binding of IF-2 and IF-3 on the 30S subunit to which N-formylmethionyl-tRNA(fMet) subsequently binds. Helps modulate mRNA selection, yielding the 30S pre-initiation complex (PIC). Upon addition of the 50S ribosomal subunit IF-1, IF-2 and IF-3 are released leaving the mature 70S translation initiation complex. This Alkaliphilus oremlandii (strain OhILAs) (Clostridium oremlandii (strain OhILAs)) protein is Translation initiation factor IF-1.